Here is a 606-residue protein sequence, read N- to C-terminus: Acetylcholinesterase (606 aa).

An N-terminal signal peptide occupies residues 1–28 (MPSCQPGKMPAPWPWWLQLLLCIPSCVA). A disulfide bridge connects residues C98 and C125. S231 functions as the Acyl-ester intermediate in the catalytic mechanism. A disulfide bridge links C285 with C296. The N-linked (GlcNAc...) asparagine glycan is linked to N289. Residue E358 is the Charge relay system of the active site. N374 carries N-linked (GlcNAc...) asparagine glycosylation. C433 and C552 are disulfide-bonded. H471 serves as the catalytic Charge relay system. N484 is a glycosylation site (N-linked (GlcNAc...) asparagine).

Belongs to the type-B carboxylesterase/lipase family. In terms of assembly, isoform S is monomeric. Isoform T can form oligomers, including collagen-tailed forms. Post-translationally, the N-terminus is blocked. As to expression, liver and muscle contain both isoform T and isoform S. Venom gland predominantly contains isoform S.

Its subcellular location is the synapse. It localises to the secreted. The protein localises to the cell membrane. It catalyses the reaction acetylcholine + H2O = choline + acetate + H(+). Inhibited by active site inhibitors: edrophonium, trimethyl-(m-acetamidopheny1)-ammonium iodide, and trimethyl-(p-acetarnidopheny1)-ammonium iodide. Inhibited by both active and peripheral site inhibitors: decamethonium, and BW284c51. Inhibited by peripheral site inhibitors: snake acetylcholinesterase fasciculin-2, propidium, gallamine, D-tubocurarine, and tacrine. Also inhibited by antibodies Elec410 and Fab410. In terms of biological role, in muscle, it terminates signal transduction at the neuromuscular junction by rapid hydrolysis of the acetylcholine released into the synaptic cleft. In liver, its function is unclear: it could serve as a safeguard against any diffusion of acetylcholine from synapses into the circulation. In venom, its toxic role is unclear: it could result in less musculatory control by rapidly hydrolyzing acetylcholine, or that it works synergistically with alkaline phosphatase (ALP) in paralyzing prey through hypotension. The polypeptide is Acetylcholinesterase (ACHE) (Bungarus fasciatus (Banded krait)).